The chain runs to 242 residues: HTH domain-truncated transcriptional regulator QseD (242 aa).

The protein belongs to the LysR transcriptional regulatory family.

Represses EHEC virulence expression. Down-regulates expression of LEE (locus of enterocyte effacement) and iraD genes, and alters AE (attaching and effacing) lesion formation. May regulate transcription through interactions with another HTH DNA-binding protein. The protein is HTH domain-truncated transcriptional regulator QseD (qseD) of Escherichia coli O157:H7.